Consider the following 117-residue polypeptide: Minor capsid protein p17 (117 aa).

Asn12 carries N-linked (GlcNAc...) asparagine; by host glycosylation. The helical transmembrane segment at 39 to 59 (AILLGILILLVIILIIVAIVY) threads the bilayer. The tract at residues 96–117 (KNSTSQQSHIPSDEQLAELAHS) is disordered. N-linked (GlcNAc...) asparagine; by host glycosylation is present at Asn97.

Belongs to the asfivirus minor capsid protein p17 family. Interacts with the minor capsid protein M1249L and with the hexon capsid protein p72 capsomers; these interactions form a rigid zipper structure that stabilizes the capsomers. Interacts with host STING1.

It is found in the virion membrane. Its subcellular location is the host endoplasmic reticulum membrane. Functionally, together with the penton and the other minor capsid proteins (M1249L, p49), forms a complicated network immediately below the outer capsid shell, stabilizing the whole capsid. Three copies of p17 encircle each p72 capsomer in the inner capsid shell, anchoring p72 capsomers on the inner membrane. Required for the assembly of the capsid and icosahedral morphogenesis. Additionally, inhibits the host cGAS-STING pathway through its interaction with STING1 and subsequent interference of the recruitment of downstream components TBK1 and IKBKE. This African swine fever virus (isolate Tick/South Africa/Pretoriuskop Pr4/1996) (ASFV) protein is Minor capsid protein p17.